We begin with the raw amino-acid sequence, 427 residues long: Dihydroorotase (427 aa).

Residues His60 and His62 each contribute to the Zn(2+) site. Residues 62-64 (HLR) and Asn94 each bind substrate. Zn(2+) is bound by residues Asp152, His179, and His232. Asn278 serves as a coordination point for substrate. Asp305 is a binding site for Zn(2+). Asp305 is a catalytic residue. Substrate-binding positions include His309 and 323–324 (FG).

This sequence belongs to the metallo-dependent hydrolases superfamily. DHOase family. Class I DHOase subfamily. The cofactor is Zn(2+).

The catalysed reaction is (S)-dihydroorotate + H2O = N-carbamoyl-L-aspartate + H(+). It participates in pyrimidine metabolism; UMP biosynthesis via de novo pathway; (S)-dihydroorotate from bicarbonate: step 3/3. Its function is as follows. Catalyzes the reversible cyclization of carbamoyl aspartate to dihydroorotate. This Bacillus caldolyticus protein is Dihydroorotase.